The sequence spans 85 residues: Large ribosomal subunit protein bL27 (85 aa).

Positions 1–22 (MAHKKGQGSSRNGRDSPGQHRG) are disordered.

Belongs to the bacterial ribosomal protein bL27 family.

This is Large ribosomal subunit protein bL27 from Anaeromyxobacter sp. (strain Fw109-5).